Consider the following 213-residue polypeptide: Uridine kinase (213 aa).

15–22 (GGSGSGKT) serves as a coordination point for ATP.

Belongs to the uridine kinase family.

The protein localises to the cytoplasm. The enzyme catalyses uridine + ATP = UMP + ADP + H(+). The catalysed reaction is cytidine + ATP = CMP + ADP + H(+). It functions in the pathway pyrimidine metabolism; CTP biosynthesis via salvage pathway; CTP from cytidine: step 1/3. Its pathway is pyrimidine metabolism; UMP biosynthesis via salvage pathway; UMP from uridine: step 1/1. The sequence is that of Uridine kinase from Ligilactobacillus salivarius (strain UCC118) (Lactobacillus salivarius).